Here is a 323-residue protein sequence, read N- to C-terminus: ADP-L-glycero-D-manno-heptose-6-epimerase (323 aa).

Residues 10 to 11 (FI), 31 to 32 (DN), lysine 38, arginine 53, 75 to 79 (MGACS), and asparagine 92 contribute to the NADP(+) site. Residue tyrosine 143 is the Proton acceptor of the active site. Lysine 147 contacts NADP(+). A substrate-binding site is contributed by asparagine 170. NADP(+)-binding residues include valine 171 and lysine 179. Residue lysine 179 is the Proton acceptor of the active site. Substrate contacts are provided by residues aspartate 181, lysine 188, 202–205 (FRSC), arginine 216, and tyrosine 281.

It belongs to the NAD(P)-dependent epimerase/dehydratase family. HldD subfamily. In terms of assembly, homopentamer. It depends on NADP(+) as a cofactor.

It catalyses the reaction ADP-D-glycero-beta-D-manno-heptose = ADP-L-glycero-beta-D-manno-heptose. It participates in nucleotide-sugar biosynthesis; ADP-L-glycero-beta-D-manno-heptose biosynthesis; ADP-L-glycero-beta-D-manno-heptose from D-glycero-beta-D-manno-heptose 7-phosphate: step 4/4. Functionally, catalyzes the interconversion between ADP-D-glycero-beta-D-manno-heptose and ADP-L-glycero-beta-D-manno-heptose via an epimerization at carbon 6 of the heptose. In Nitratidesulfovibrio vulgaris (strain DP4) (Desulfovibrio vulgaris), this protein is ADP-L-glycero-D-manno-heptose-6-epimerase.